Consider the following 289-residue polypeptide: Myoblast determination protein 1 homolog A (289 aa).

The region spanning 95–146 (DRRKAATMRERRRLSKVNEAFETLKRYTSTNPNQRLPKVEILRNAIRYIESL) is the bHLH domain. The disordered stretch occupies residues 165 to 212 (SGDSDASSPRSNCSDGMMDYNSPPCGSRRRNSYDSSFYSDSPNDSRLG). Polar residues-rich tracts occupy residues 168-178 (SDASSPRSNCS) and 197-208 (YDSSFYSDSPND).

As to quaternary structure, efficient DNA binding requires dimerization with another bHLH protein.

The protein localises to the nucleus. In terms of biological role, may act as a transcriptional activator that promotes transcription of muscle-specific target genes and plays a role in muscle differentiation. The chain is Myoblast determination protein 1 homolog A (myod1-a) from Xenopus laevis (African clawed frog).